The sequence spans 412 residues: Argininosuccinate synthase (412 aa).

ATP-binding positions include 10–18 (AYSGGLDTS) and alanine 36. Residues tyrosine 87 and serine 92 each coordinate L-citrulline. The residue at position 87 (tyrosine 87) is a Phosphotyrosine. Lysine 112 is modified (N6-acetyllysine). Tyrosine 113 carries the phosphotyrosine modification. 115–123 (SHGATGKGN) contacts ATP. L-aspartate-binding residues include threonine 119, asparagine 123, and aspartate 124. Residue asparagine 123 coordinates L-citrulline. Arginine 127 is an L-citrulline binding site. Lysine 165 and lysine 176 each carry N6-acetyllysine; by CLOCK. Phosphoserine occurs at positions 177 and 180. Residues serine 180 and serine 189 each coordinate L-citrulline. A Phosphoserine modification is found at serine 219. L-citrulline-binding residues include glutamate 270 and tyrosine 282.

Belongs to the argininosuccinate synthase family. Type 1 subfamily. As to quaternary structure, homotetramer. Interacts with NMRAL1. Interacts with CLOCK; in a circadian manner. Forms tissue-specific complexes with ASL, SLC7A1, HSP90AA1 and nitric oxide synthase NOS1, NOS2 or NOS3; the complex regulates cell-autonomous L-arginine synthesis and citrulline recycling while channeling extracellular L-arginine to nitric oxide synthesis pathway. Acetylated by CLOCK in a circadian manner which negatively regulates its enzyme activity. Deacetylated by histone deacetylases. Widely expressed.

The protein localises to the cytoplasm. It localises to the cytosol. The catalysed reaction is L-citrulline + L-aspartate + ATP = 2-(N(omega)-L-arginino)succinate + AMP + diphosphate + H(+). It participates in amino-acid biosynthesis; L-arginine biosynthesis; L-arginine from L-ornithine and carbamoyl phosphate: step 2/3. The protein operates within nitrogen metabolism; urea cycle; (N(omega)-L-arginino)succinate from L-aspartate and L-citrulline: step 1/1. Functionally, one of the enzymes of the urea cycle, the metabolic pathway transforming neurotoxic amonia produced by protein catabolism into inocuous urea in the liver of ureotelic animals. Catalyzes the formation of arginosuccinate from aspartate, citrulline and ATP and together with ASL it is responsible for the biosynthesis of arginine in most body tissues. This is Argininosuccinate synthase from Mus musculus (Mouse).